Reading from the N-terminus, the 254-residue chain is 3-beta-hydroxysteroid dehydrogenase (254 aa).

Residues 12–40 and Asp61 contribute to the NAD(+) site; that span reads VTGGASGVGLEVVKLLLGEGAKVAFSDIN. Ser139 lines the substrate pocket. Tyr152 serves as the catalytic Proton acceptor. Residue Lys156 participates in NAD(+) binding.

It belongs to the short-chain dehydrogenases/reductases (SDR) family. Homotetramer.

The enzyme catalyses testosterone + NAD(+) = androst-4-ene-3,17-dione + NADH + H(+). It carries out the reaction testosterone + NADP(+) = androst-4-ene-3,17-dione + NADPH + H(+). This Comamonas testosteroni (Pseudomonas testosteroni) protein is 3-beta-hydroxysteroid dehydrogenase.